The sequence spans 253 residues: Bridging integrator 3 (253 aa).

In terms of domain architecture, BAR spans 9–232 (GQPKKQIVSK…LDQPGHSDEQ (224 aa)). Coiled coils occupy residues 16–57 (VSKT…AMSK) and 120–151 (SLNM…KEKT). A disordered region spans residues 222–241 (QLDQPGHSDEQRERENETKL). Residues 227–241 (GHSDEQRERENETKL) show a composition bias toward basic and acidic residues.

The protein resides in the cytoplasm. It localises to the cytoskeleton. Its function is as follows. Involved in cytokinesis and septation where it has a role in the localization of F-actin. This is Bridging integrator 3 (Bin3) from Mus musculus (Mouse).